Reading from the N-terminus, the 511-residue chain is Dihydrolipoyl dehydrogenase, mitochondrial (511 aa).

FAD contacts are provided by residues 75-84 (EKRGTLGGTC), Lys93, Gly157, and 187-189 (TGS). Residues Cys84 and Cys89 are joined by a disulfide bond. Residues 224 to 231 (GGGIIGLE), Glu247, Leu281, and Gly316 contribute to the NAD(+) site. Residues Asp357 and 363-366 (MLAH) contribute to the FAD site. His489 functions as the Proton acceptor in the catalytic mechanism.

The protein belongs to the class-I pyridine nucleotide-disulfide oxidoreductase family. In terms of assembly, homodimer. FAD serves as cofactor.

The protein localises to the mitochondrion matrix. It carries out the reaction N(6)-[(R)-dihydrolipoyl]-L-lysyl-[protein] + NAD(+) = N(6)-[(R)-lipoyl]-L-lysyl-[protein] + NADH + H(+). Functionally, lipoamide dehydrogenase is a component of the alpha-ketoacid dehydrogenase complexes. Malfunction of this protein blocks the progression of cell cycle from G1 to S phase. The chain is Dihydrolipoyl dehydrogenase, mitochondrial (dld1) from Schizosaccharomyces pombe (strain 972 / ATCC 24843) (Fission yeast).